A 136-amino-acid polypeptide reads, in one-letter code: Large ribosomal subunit protein uL16 (136 aa).

The protein belongs to the universal ribosomal protein uL16 family. Part of the 50S ribosomal subunit.

In terms of biological role, binds 23S rRNA and is also seen to make contacts with the A and possibly P site tRNAs. In Ehrlichia ruminantium (strain Gardel), this protein is Large ribosomal subunit protein uL16.